A 276-amino-acid polypeptide reads, in one-letter code: tRNA (guanine-N(7)-)-methyltransferase (276 aa).

Positions 1-36 are disordered; sequence MAAETRNVAGAEAPPPQKRYYRQRAHSNPMADHTLR. An N-acetylalanine modification is found at A2. Position 27 is a phosphoserine; by PKB/AKT1 and RPS6KA3 (S27). G84, E107, I108, R109, N140, A141, and L160 together coordinate S-adenosyl-L-homocysteine. G84 and E107 together coordinate S-adenosyl-L-methionine. The S-adenosyl-L-methionine site is built by R109, N140, A141, and L160. The active site involves D163. Residues 164 to 172 form an alphaC helix region; the sequence is PHFKRTKHK. Residues T238 and E240 each contribute to the S-adenosyl-L-homocysteine site. S-adenosyl-L-methionine contacts are provided by T238 and E240. Residues 238–246 are alpha6 helix; the sequence is TEEGKKVLR.

The protein belongs to the class I-like SAM-binding methyltransferase superfamily. TrmB family. Catalytic component of the METTL1-WDR4 complex, composed of METTL1 and WDR4. In terms of processing, phosphorylation at Ser-27 by PKB/AKT1 inactivates its methyltransferase activity via a steric interference mechanism in the active site that locally disrupts the catalytic center. Phosphorylation at Ser-27 does not affect the interaction with WDR4. As to expression, ubiquitous.

Its subcellular location is the nucleus. It carries out the reaction guanosine(46) in tRNA + S-adenosyl-L-methionine = N(7)-methylguanosine(46) in tRNA + S-adenosyl-L-homocysteine. The enzyme catalyses a guanosine in mRNA + S-adenosyl-L-methionine = an N(7)-methylguanosine in mRNA + S-adenosyl-L-homocysteine. It catalyses the reaction a guanosine in miRNA + S-adenosyl-L-methionine = an N(7)-methylguanosine in miRNA + S-adenosyl-L-homocysteine. Its pathway is tRNA modification; N(7)-methylguanine-tRNA biosynthesis. In terms of biological role, catalytic component of METTL1-WDR4 methyltransferase complex that mediates the formation of N(7)-methylguanine in a subset of RNA species, such as tRNAs, mRNAs and microRNAs (miRNAs). Catalyzes the formation of N(7)-methylguanine at position 46 (m7G46) in a large subset of tRNAs that contain the 5'-RAGGU-3' motif within the variable loop. M7G46 interacts with C13-G22 in the D-loop to stabilize tRNA tertiary structure and protect tRNAs from decay. Also acts as a methyltransferase for a subset of internal N(7)-methylguanine in mRNAs. Internal N(7)-methylguanine methylation of mRNAs in response to stress promotes their relocalization to stress granules, thereby suppressing their translation. Also methylates a specific subset of miRNAs, such as let-7. N(7)-methylguanine methylation of let-7 miRNA promotes let-7 miRNA processing by disrupting an inhibitory secondary structure within the primary miRNA transcript (pri-miRNA). Acts as a regulator of embryonic stem cell self-renewal and differentiation. The sequence is that of tRNA (guanine-N(7)-)-methyltransferase from Homo sapiens (Human).